A 114-amino-acid polypeptide reads, in one-letter code: Putative ANKRD40 C-terminal-like protein (114 aa).

In Homo sapiens (Human), this protein is Putative ANKRD40 C-terminal-like protein.